The sequence spans 156 residues: Large ribosomal subunit protein uL30 (156 aa).

This sequence belongs to the universal ribosomal protein uL30 family. In terms of assembly, part of the 50S ribosomal subunit.

This chain is Large ribosomal subunit protein uL30, found in Sulfolobus acidocaldarius (strain ATCC 33909 / DSM 639 / JCM 8929 / NBRC 15157 / NCIMB 11770).